The primary structure comprises 102 residues: Small ribosomal subunit protein uS10 (102 aa).

It belongs to the universal ribosomal protein uS10 family. In terms of assembly, part of the 30S ribosomal subunit.

Functionally, involved in the binding of tRNA to the ribosomes. The polypeptide is Small ribosomal subunit protein uS10 (Streptomyces griseus subsp. griseus (strain JCM 4626 / CBS 651.72 / NBRC 13350 / KCC S-0626 / ISP 5235)).